A 465-amino-acid polypeptide reads, in one-letter code: Cysteine--tRNA ligase (465 aa).

Residue Cys-27 participates in Zn(2+) binding. Residues 29 to 39 (PTVYNFFHIGN) carry the 'HIGH' region motif. 3 residues coordinate Zn(2+): Cys-207, His-232, and Glu-236. Residues 264 to 268 (KMSKS) carry the 'KMSKS' region motif. Lys-267 lines the ATP pocket.

The protein belongs to the class-I aminoacyl-tRNA synthetase family. Monomer. It depends on Zn(2+) as a cofactor.

The protein resides in the cytoplasm. It carries out the reaction tRNA(Cys) + L-cysteine + ATP = L-cysteinyl-tRNA(Cys) + AMP + diphosphate. The sequence is that of Cysteine--tRNA ligase from Clostridium botulinum (strain Okra / Type B1).